Reading from the N-terminus, the 174-residue chain is Large ribosomal subunit protein uL18 (174 aa).

This sequence belongs to the universal ribosomal protein uL18 family. As to quaternary structure, part of the 50S ribosomal subunit. Contacts the 5S and 23S rRNAs.

This is one of the proteins that bind and probably mediate the attachment of the 5S RNA into the large ribosomal subunit, where it forms part of the central protuberance. This is Large ribosomal subunit protein uL18 from Methanosarcina acetivorans (strain ATCC 35395 / DSM 2834 / JCM 12185 / C2A).